A 377-amino-acid chain; its full sequence is N5-carboxyaminoimidazole ribonucleotide synthase (377 aa).

Residues R93, K133, G138–Q144, E175–V178, E183, H206, and N257–E258 contribute to the ATP site. Residues K97–C287 form the ATP-grasp domain.

This sequence belongs to the PurK/PurT family. As to quaternary structure, homodimer.

It carries out the reaction 5-amino-1-(5-phospho-beta-D-ribosyl)imidazole + hydrogencarbonate + ATP = 5-carboxyamino-1-(5-phospho-D-ribosyl)imidazole + ADP + phosphate + 2 H(+). It functions in the pathway purine metabolism; IMP biosynthesis via de novo pathway; 5-amino-1-(5-phospho-D-ribosyl)imidazole-4-carboxylate from 5-amino-1-(5-phospho-D-ribosyl)imidazole (N5-CAIR route): step 1/2. Functionally, catalyzes the ATP-dependent conversion of 5-aminoimidazole ribonucleotide (AIR) and HCO(3)(-) to N5-carboxyaminoimidazole ribonucleotide (N5-CAIR). This is N5-carboxyaminoimidazole ribonucleotide synthase from Vibrio cholerae serotype O1 (strain ATCC 39315 / El Tor Inaba N16961).